Here is a 492-residue protein sequence, read N- to C-terminus: E3 ubiquitin-protein ligase TRIM35 (492 aa).

N-acetylmethionine is present on Met-1. Ser-4 and Ser-8 each carry phosphoserine. Residues Cys-21–Lys-61 form an RING-type zinc finger. The segment at Arg-96–Val-137 adopts a B box-type zinc-finger fold. The Zn(2+) site is built by Cys-101, His-104, Cys-123, and His-129. Residues Ala-210 to Asp-249 are a coiled coil. A B30.2/SPRY domain is found at Tyr-283 to Val-486.

Interacts with PKM isoform M2, but not isoform M1; this interaction may compete with that between PKM and FGFR1, and hence reduces FGFR1-dependent tyrosine phosphorylation of PKM. Interacts with IRF7; this interaction promotes IRF7 proteasomal degradation. Interacts with TRAF3; this interaction promotes TRAF3 activation.

It is found in the cytoplasm. The protein resides in the nucleus. It catalyses the reaction S-ubiquitinyl-[E2 ubiquitin-conjugating enzyme]-L-cysteine + [acceptor protein]-L-lysine = [E2 ubiquitin-conjugating enzyme]-L-cysteine + N(6)-ubiquitinyl-[acceptor protein]-L-lysine.. It functions in the pathway protein modification; protein ubiquitination. Functionally, E3 ubiquitin-protein ligase that participates in multiple biological processes including cell death, glucose metabolism, and in particular, the innate immune response. Mediates 'Lys-63'-linked polyubiquitination of TRAF3 thereby promoting type I interferon production via RIG-I signaling pathway. Can also catalyze 'Lys-48'-linked polyubiquitination and proteasomal degradation of viral proteins such as influenza virus PB2. Acts as a negative feedback regulator of TLR7- and TLR9-triggered signaling. Mechanistically, promotes the 'Lys-48'-linked ubiquitination of IRF7 and induces its degradation via a proteasome-dependent pathway. Reduces FGFR1-dependent tyrosine phosphorylation of PKM, inhibiting PKM-dependent lactate production, glucose metabolism, and cell growth. This Pongo abelii (Sumatran orangutan) protein is E3 ubiquitin-protein ligase TRIM35 (TRIM35).